A 516-amino-acid chain; its full sequence is GMP synthase [glutamine-hydrolyzing] (516 aa).

Residues 8 to 198 (KILILDFGSQ…VVNICGCDTL (191 aa)) enclose the Glutamine amidotransferase type-1 domain. C84 serves as the catalytic Nucleophile. Catalysis depends on residues H172 and E174. Positions 199–391 (WNIENIIEND…LGLPYNMLYR (193 aa)) constitute a GMPS ATP-PPase domain. 226–232 (SGGVDSS) lines the ATP pocket.

As to quaternary structure, homodimer.

It catalyses the reaction XMP + L-glutamine + ATP + H2O = GMP + L-glutamate + AMP + diphosphate + 2 H(+). Its pathway is purine metabolism; GMP biosynthesis; GMP from XMP (L-Gln route): step 1/1. Functionally, catalyzes the synthesis of GMP from XMP. This Francisella tularensis subsp. holarctica (strain LVS) protein is GMP synthase [glutamine-hydrolyzing].